Reading from the N-terminus, the 628-residue chain is tRNA uridine 5-carboxymethylaminomethyl modification enzyme MnmG (628 aa).

14–19 contacts FAD; sequence GAGHAG. 273–287 is a binding site for NAD(+); sequence GPRYCPSIEDKVVRF.

The protein belongs to the MnmG family. Homodimer. Heterotetramer of two MnmE and two MnmG subunits. Requires FAD as cofactor.

The protein localises to the cytoplasm. NAD-binding protein involved in the addition of a carboxymethylaminomethyl (cmnm) group at the wobble position (U34) of certain tRNAs, forming tRNA-cmnm(5)s(2)U34. This is tRNA uridine 5-carboxymethylaminomethyl modification enzyme MnmG from Bacillus velezensis (strain DSM 23117 / BGSC 10A6 / LMG 26770 / FZB42) (Bacillus amyloliquefaciens subsp. plantarum).